Consider the following 399-residue polypeptide: Leu/Ile/Val-binding protein homolog 7 (399 aa).

The N-terminal stretch at 1–22 (MEKHLIALSVAALLAGAAPASA) is a signal peptide.

It belongs to the leucine-binding protein family.

Its function is as follows. Component of an amino-acid transport system. The sequence is that of Leu/Ile/Val-binding protein homolog 7 from Brucella melitensis biotype 1 (strain ATCC 23456 / CCUG 17765 / NCTC 10094 / 16M).